A 247-amino-acid chain; its full sequence is Enolase-phosphatase E1 (247 aa).

Belongs to the HAD-like hydrolase superfamily. MasA/MtnC family. As to quaternary structure, monomer. Mg(2+) serves as cofactor.

It carries out the reaction 5-methylsulfanyl-2,3-dioxopentyl phosphate + H2O = 1,2-dihydroxy-5-(methylsulfanyl)pent-1-en-3-one + phosphate. Its pathway is amino-acid biosynthesis; L-methionine biosynthesis via salvage pathway; L-methionine from S-methyl-5-thio-alpha-D-ribose 1-phosphate: step 3/6. It participates in amino-acid biosynthesis; L-methionine biosynthesis via salvage pathway; L-methionine from S-methyl-5-thio-alpha-D-ribose 1-phosphate: step 4/6. Its function is as follows. Bifunctional enzyme that catalyzes the enolization of 2,3-diketo-5-methylthiopentyl-1-phosphate (DK-MTP-1-P) into the intermediate 2-hydroxy-3-keto-5-methylthiopentenyl-1-phosphate (HK-MTPenyl-1-P), which is then dephosphorylated to form the acireductone 1,2-dihydroxy-3-keto-5-methylthiopentene (DHK-MTPene). The sequence is that of Enolase-phosphatase E1 from Leptospira biflexa serovar Patoc (strain Patoc 1 / Ames).